The following is a 253-amino-acid chain: Sulfate transporter CysZ (253 aa).

A run of 4 helical transmembrane segments spans residues 31-51 (FVIL…WWLF), 75-95 (LLWP…FSTI), 151-171 (IVLL…PVLW), and 222-242 (IPLL…AMWV).

It belongs to the CysZ family.

The protein localises to the cell inner membrane. Its function is as follows. High affinity, high specificity proton-dependent sulfate transporter, which mediates sulfate uptake. Provides the sulfur source for the cysteine synthesis pathway. This is Sulfate transporter CysZ from Escherichia coli O81 (strain ED1a).